Here is a 382-residue protein sequence, read N- to C-terminus: D-galactonate dehydratase (382 aa).

Position 183 (Asp-183) interacts with Mg(2+). The active-site Proton donor is the His-185. Mg(2+) contacts are provided by Glu-209 and Glu-235. The Proton acceptor role is filled by His-285. Residues 361 to 382 (NENPPDWRNPVWRHSDGSIAEW) are disordered.

Belongs to the mandelate racemase/muconate lactonizing enzyme family. GalD subfamily. Requires Mg(2+) as cofactor.

The enzyme catalyses D-galactonate = 2-dehydro-3-deoxy-D-galactonate + H2O. It participates in carbohydrate acid metabolism; D-galactonate degradation; D-glyceraldehyde 3-phosphate and pyruvate from D-galactonate: step 1/3. Functionally, catalyzes the dehydration of D-galactonate to 2-keto-3-deoxy-D-galactonate. This is D-galactonate dehydratase from Xanthomonas oryzae pv. oryzae (strain MAFF 311018).